Reading from the N-terminus, the 321-residue chain is Putative ribose-phosphate pyrophosphokinase 2 (321 aa).

ATP contacts are provided by residues aspartate 43–glutamate 45 and arginine 102–glutamine 103. The Mg(2+) site is built by histidine 136 and aspartate 176. Aspartate 225 serves as a coordination point for D-ribose 5-phosphate.

It belongs to the ribose-phosphate pyrophosphokinase family. Class I subfamily. As to quaternary structure, homohexamer. It depends on Mg(2+) as a cofactor.

The protein resides in the cytoplasm. The enzyme catalyses D-ribose 5-phosphate + ATP = 5-phospho-alpha-D-ribose 1-diphosphate + AMP + H(+). It participates in metabolic intermediate biosynthesis; 5-phospho-alpha-D-ribose 1-diphosphate biosynthesis; 5-phospho-alpha-D-ribose 1-diphosphate from D-ribose 5-phosphate (route I): step 1/1. Functionally, involved in the biosynthesis of the central metabolite phospho-alpha-D-ribosyl-1-pyrophosphate (PRPP) via the transfer of pyrophosphoryl group from ATP to 1-hydroxyl of ribose-5-phosphate (Rib-5-P). This is Putative ribose-phosphate pyrophosphokinase 2 from Lactiplantibacillus plantarum (strain ATCC BAA-793 / NCIMB 8826 / WCFS1) (Lactobacillus plantarum).